Consider the following 338-residue polypeptide: UDP-glucose 4-epimerase (338 aa).

NAD(+) contacts are provided by residues 11–12 (YI), 31–36 (DNLCNS), 58–59 (DI), 80–84 (FAGLK), Asn-99, Ser-124, Tyr-149, Lys-153, and Phe-178. Substrate contacts are provided by Ser-124 and Tyr-149. The active-site Proton acceptor is the Tyr-149. Substrate-binding positions include Asn-179, 199 to 200 (NL), 216 to 218 (AIF), Arg-231, 292 to 295 (REGD), and Tyr-299.

Belongs to the NAD(P)-dependent epimerase/dehydratase family. Homodimer. NAD(+) is required as a cofactor.

The enzyme catalyses UDP-alpha-D-glucose = UDP-alpha-D-galactose. The protein operates within carbohydrate metabolism; galactose metabolism. Its activity is regulated as follows. Inhibited by UDP-phenol and NaBH3CN. Involved in the metabolism of galactose. Catalyzes the conversion of UDP-galactose (UDP-Gal) to UDP-glucose (UDP-Glc) through a mechanism involving the transient reduction of NAD. It is only active on UDP-galactose and UDP-glucose. This is UDP-glucose 4-epimerase (galE) from Escherichia coli (strain K12).